Reading from the N-terminus, the 501-residue chain is MSKGKRAPYTRPCDSCSFRKVKCDMKTPCSRCVLNNLKCTNNRIRKKCGPKKIRDRTREAINNLSNKEDPKTNSFIPHFQLDKLQPCLETYQTWYYGIWPVLSISDLNMKITKRDVSAYALACALSAAILNQIDFISNNGTYCIPEDVKKLDFIGECIRARTFMNYQMTPTLETILTSFFLHVAEVNKGSKPAAIIYLREAITMAQIIGLHNESTYKSKPVAEAHRMRKIYFMLMVTERFMCIDDLIPVVLENSIKEFSLDDEQYSVLIDGFKELVKVFSIPSKAIFDRFIQMNDSISMPPETAGLLNKIQLELESICISPVAPDIQKANIIVSKYWMKALTWKITRKNNLLDDFVTTLCVKYPIELSEQFLGEIKSIPLRAFESNGPGVVFKLLSIATVLIDSINLSNDVSGYESLQRMFDLISKLKKTDMIIPRREYDRIKEALTKMEIDIFFSSAQSGGYISEVESNGSLDAFLTDPLVFYSGSNDNPTPSYIPDYQK.

The segment at residues 13–39 (CDSCSFRKVKCDMKTPCSRCVLNNLKC) is a DNA-binding region (zn(2)-C6 fungal-type).

The protein belongs to the MAL13 family.

Its subcellular location is the nucleus. In terms of biological role, affects sucrose utilization and alpha-glucosidase activity. Probable transcriptional activator. This Candida albicans (strain SC5314 / ATCC MYA-2876) (Yeast) protein is Probable sucrose utilization protein SUC1 (SUC1).